Here is a 137-residue protein sequence, read N- to C-terminus: Large ribosomal subunit protein uL13 (137 aa).

Arg-55 carries the post-translational modification Citrulline. Ser-73 is modified (phosphoserine). Arg-136 is subject to Citrulline.

Belongs to the universal ribosomal protein uL13 family. As to quaternary structure, component of the 60S ribosome. Component of the GAIT complex. Interacts with EIF4G1. Phosphorylation at Ser-73 upon interferon-gamma treatment in macrophages involves a DAPK1-DAPK3 kinase cascade and is causing release from the ribosome, association with the GAIT complex and subsequent involvement in transcript-selective translation inhibition. Post-translationally, citrullinated by PADI4.

It localises to the cytoplasm. Associated with ribosomes but is not required for canonical ribosome function and has extra-ribosomal functions. Component of the GAIT (gamma interferon-activated inhibitor of translation) complex which mediates interferon-gamma-induced transcript-selective translation inhibition in inflammation processes. Upon interferon-gamma activation and subsequent phosphorylation dissociates from the ribosome and assembles into the GAIT complex which binds to stem loop-containing GAIT elements in the 3'-UTR of diverse inflammatory mRNAs (such as ceruplasmin) and suppresses their translation. In the GAIT complex interacts with m7G cap-bound eIF4G at or near the eIF3-binding site and blocks the recruitment of the 43S ribosomal complex. Involved in methylation of rRNA. In Sus scrofa (Pig), this protein is Large ribosomal subunit protein uL13 (RPL13A).